Consider the following 125-residue polypeptide: Small ribosomal subunit protein uS13 (125 aa).

The tract at residues 93 to 125 (RKGLPVRGQRTKTNARTRKGPKRTVAGKKKAGR) is disordered.

Belongs to the universal ribosomal protein uS13 family. Part of the 30S ribosomal subunit. Forms a loose heterodimer with protein S19. Forms two bridges to the 50S subunit in the 70S ribosome.

Functionally, located at the top of the head of the 30S subunit, it contacts several helices of the 16S rRNA. In the 70S ribosome it contacts the 23S rRNA (bridge B1a) and protein L5 of the 50S subunit (bridge B1b), connecting the 2 subunits; these bridges are implicated in subunit movement. Contacts the tRNAs in the A and P-sites. The polypeptide is Small ribosomal subunit protein uS13 (Paenarthrobacter aurescens (strain TC1)).